The following is a 143-amino-acid chain: Large ribosomal subunit protein uL15 (143 aa).

Composition is skewed to basic residues over residues 1 to 13 (MIRKSKKITKMRG) and 23 to 38 (KKHRGAGHRGGRGNAG). A disordered region spans residues 1 to 38 (MIRKSKKITKMRGSRTCGYGEAKKHRGAGHRGGRGNAG).

It belongs to the universal ribosomal protein uL15 family. Part of the 50S ribosomal subunit.

Binds to the 23S rRNA. The sequence is that of Large ribosomal subunit protein uL15 from Methanococcus maripaludis (strain C5 / ATCC BAA-1333).